The following is a 955-amino-acid chain: Anion exchange protein 4 (955 aa).

Disordered stretches follow at residues 20–50 (VGQL…PEDP), 154–190 (HTQT…PLRQ), and 331–352 (PHRT…PELQ). The next 4 membrane-spanning stretches (helical) occupy residues 387–407 (AVLY…GLLG), 415–435 (GVLE…LMAG), 472–492 (VGIW…SVLV), and 503–523 (FCAL…LNLA). The interval 387–955 (AVLYIYLATV…KAPEINISVN (569 aa)) is membrane (anion exchange). 2 N-linked (GlcNAc...) asparagine glycosylation sites follow: N548 and N572. The next 7 helical transmembrane spans lie at 596-616 (VPDI…FAIA), 637-657 (FSSI…GLAM), 684-704 (PWWL…LIFM), 730-750 (LFCV…WYVS), 785-804 (LTGL…APVL), 811-830 (VLYG…IQFM), and 871-891 (LWII…LGLV). Residues 918 to 955 (RNVPEKGLEPGHSFSGSDSEDSELMYQPKAPEINISVN) are disordered. N951 carries N-linked (GlcNAc...) asparagine glycosylation.

Belongs to the anion exchanger (TC 2.A.31) family. In terms of tissue distribution, highly expressed in kidney. Expressed in the outer medulla and the inner medulla in the kidney cortex. Only expressed in beta-intercalated cells.

The protein resides in the lateral cell membrane. It localises to the apical cell membrane. The protein localises to the basolateral cell membrane. It carries out the reaction 2 hydrogencarbonate(out) + chloride(in) + Na(+)(out) = 2 hydrogencarbonate(in) + chloride(out) + Na(+)(in). The enzyme catalyses K(+)(in) + 2 hydrogencarbonate(in) + chloride(out) = K(+)(out) + 2 hydrogencarbonate(out) + chloride(in). The catalysed reaction is Li(+)(in) + 2 hydrogencarbonate(in) + chloride(out) = Li(+)(out) + 2 hydrogencarbonate(out) + chloride(in). It catalyses the reaction Rb(+)(in) + 2 hydrogencarbonate(in) + chloride(out) = Rb(+)(out) + 2 hydrogencarbonate(out) + chloride(in). It carries out the reaction Cs(+)(in) + 2 hydrogencarbonate(in) + chloride(out) = Cs(+)(out) + 2 hydrogencarbonate(out) + chloride(in). In terms of biological role, electroneutral Cl(-)/HCO3(-) antiporter that favors chloride ion entry and efflux of hydrogencarbonate and sodium ion across the basolateral membrane and may participat in salivary secretion. Also mediates Cl(-)/HCO3(-) exchange activity in the presence of K(+) as well as Cs(+), Li(+), and Rb(+). Does not contribute to Cl(-)/HCO3(-) exchanger in the apical membrane of the upper villous epithelium. The chain is Anion exchange protein 4 from Oryctolagus cuniculus (Rabbit).